The chain runs to 424 residues: FeMo cofactor biosynthesis protein NifB (424 aa).

The region spanning 12–261 (NDSSRHTYGR…PQMKHCARCR (250 aa)) is the Radical SAM core domain. 3 residues coordinate [4Fe-4S] cluster: Cys30, Cys34, and Cys37. Residues Gly84, Thr136, and Val188 each coordinate S-adenosyl-L-methionine. The [4Fe-4S] cluster site is built by Cys257 and Cys260.

The protein belongs to the radical SAM superfamily. NifB family. As to quaternary structure, monomer. [4Fe-4S] cluster is required as a cofactor.

Its pathway is cofactor biosynthesis; Fe-Mo cofactor biosynthesis. Functionally, involved in the biosynthesis of the iron-molybdenum cofactor (FeMo-co or M-cluster) found in the dinitrogenase enzyme of the nitrogenase complex in nitrogen-fixing microorganisms. NifB catalyzes the crucial step of radical SAM-dependent carbide insertion that occurs concomitant with the insertion of a 9th sulfur and the rearrangement/coupling of two [4Fe-4S] clusters into a [8Fe-9S-C] cluster, the precursor to the M-cluster. This is FeMo cofactor biosynthesis protein NifB from Chlorobaculum tepidum (strain ATCC 49652 / DSM 12025 / NBRC 103806 / TLS) (Chlorobium tepidum).